The primary structure comprises 298 residues: Probable GTP 3',8-cyclase (298 aa).

The 227-residue stretch at 4–230 (KFGREIRSLR…RKKYIVDGLE (227 aa)) folds into the Radical SAM core domain. A GTP-binding site is contributed by Arg-13. Residues Cys-20 and Cys-24 each coordinate [4Fe-4S] cluster. S-adenosyl-L-methionine is bound at residue Tyr-26. Cys-27 lines the [4Fe-4S] cluster pocket. Lys-61 contributes to the GTP binding site. Residue Gly-65 coordinates S-adenosyl-L-methionine. Thr-91 is a GTP binding site. Ser-115 is an S-adenosyl-L-methionine binding site. GTP is bound at residue Lys-152. Residues Cys-243 and Cys-246 each contribute to the [4Fe-4S] cluster site. 248-250 (RIR) contacts GTP. [4Fe-4S] cluster is bound at residue Cys-260.

This sequence belongs to the radical SAM superfamily. MoaA family. [4Fe-4S] cluster serves as cofactor.

It catalyses the reaction GTP + AH2 + S-adenosyl-L-methionine = (8S)-3',8-cyclo-7,8-dihydroguanosine 5'-triphosphate + 5'-deoxyadenosine + L-methionine + A + H(+). Its pathway is cofactor biosynthesis; molybdopterin biosynthesis. Its function is as follows. Catalyzes the cyclization of GTP to (8S)-3',8-cyclo-7,8-dihydroguanosine 5'-triphosphate. The polypeptide is Probable GTP 3',8-cyclase (Methanocaldococcus jannaschii (strain ATCC 43067 / DSM 2661 / JAL-1 / JCM 10045 / NBRC 100440) (Methanococcus jannaschii)).